Here is a 394-residue protein sequence, read N- to C-terminus: NAD(P)H-quinone oxidoreductase subunit H 2 (394 aa).

Belongs to the complex I 49 kDa subunit family. NDH-1 can be composed of about 15 different subunits; different subcomplexes with different compositions have been identified which probably have different functions.

Its subcellular location is the cell inner membrane. It catalyses the reaction a plastoquinone + NADH + (n+1) H(+)(in) = a plastoquinol + NAD(+) + n H(+)(out). The catalysed reaction is a plastoquinone + NADPH + (n+1) H(+)(in) = a plastoquinol + NADP(+) + n H(+)(out). Functionally, NDH-1 shuttles electrons from an unknown electron donor, via FMN and iron-sulfur (Fe-S) centers, to quinones in the respiratory and/or the photosynthetic chain. The immediate electron acceptor for the enzyme in this species is believed to be plastoquinone. Couples the redox reaction to proton translocation, and thus conserves the redox energy in a proton gradient. Cyanobacterial NDH-1 also plays a role in inorganic carbon-concentration. The sequence is that of NAD(P)H-quinone oxidoreductase subunit H 2 from Gloeobacter violaceus (strain ATCC 29082 / PCC 7421).